Here is a 148-residue protein sequence, read N- to C-terminus: Sec-independent protein translocase protein TatB (148 aa).

The helical transmembrane segment at 1–21 (MFGISFSELLLVGLVALLVLG) threads the bilayer. The interval 85–148 (EPTPVEHVGE…NDTTQPPRAP (64 aa)) is disordered. The segment covering 107 to 148 (APAVAPTESAPVVAPASVEHVAQTAAPTTPAPNDTTQPPRAP) has biased composition (low complexity).

The protein belongs to the TatB family. As to quaternary structure, the Tat system comprises two distinct complexes: a TatABC complex, containing multiple copies of TatA, TatB and TatC subunits, and a separate TatA complex, containing only TatA subunits. Substrates initially bind to the TatABC complex, which probably triggers association of the separate TatA complex to form the active translocon.

The protein localises to the cell inner membrane. In terms of biological role, part of the twin-arginine translocation (Tat) system that transports large folded proteins containing a characteristic twin-arginine motif in their signal peptide across membranes. Together with TatC, TatB is part of a receptor directly interacting with Tat signal peptides. TatB may form an oligomeric binding site that transiently accommodates folded Tat precursor proteins before their translocation. This chain is Sec-independent protein translocase protein TatB, found in Pseudomonas fluorescens (strain Pf0-1).